The chain runs to 475 residues: Glycogen synthase (475 aa).

Lys-15 contributes to the ADP-alpha-D-glucose binding site.

Belongs to the glycosyltransferase 1 family. Bacterial/plant glycogen synthase subfamily.

It carries out the reaction [(1-&gt;4)-alpha-D-glucosyl](n) + ADP-alpha-D-glucose = [(1-&gt;4)-alpha-D-glucosyl](n+1) + ADP + H(+). The protein operates within glycan biosynthesis; glycogen biosynthesis. Functionally, synthesizes alpha-1,4-glucan chains using ADP-glucose. The chain is Glycogen synthase from Kosmotoga olearia (strain ATCC BAA-1733 / DSM 21960 / TBF 19.5.1).